Here is a 304-residue protein sequence, read N- to C-terminus: N-acetylmuramic acid 6-phosphate etherase (304 aa).

The SIS domain occupies 62–225 (IVQAFQNGGR…TTASMVMIGK (164 aa)). Glu-90 serves as the catalytic Proton donor. Glu-121 is a catalytic residue.

This sequence belongs to the GCKR-like family. MurNAc-6-P etherase subfamily. In terms of assembly, homodimer.

The catalysed reaction is N-acetyl-D-muramate 6-phosphate + H2O = N-acetyl-D-glucosamine 6-phosphate + (R)-lactate. The protein operates within amino-sugar metabolism; 1,6-anhydro-N-acetylmuramate degradation. It participates in amino-sugar metabolism; N-acetylmuramate degradation. It functions in the pathway cell wall biogenesis; peptidoglycan recycling. Functionally, specifically catalyzes the cleavage of the D-lactyl ether substituent of MurNAc 6-phosphate, producing GlcNAc 6-phosphate and D-lactate. Together with AnmK, is also required for the utilization of anhydro-N-acetylmuramic acid (anhMurNAc) either imported from the medium or derived from its own cell wall murein, and thus plays a role in cell wall recycling. The sequence is that of N-acetylmuramic acid 6-phosphate etherase from Actinobacillus pleuropneumoniae serotype 7 (strain AP76).